A 396-amino-acid polypeptide reads, in one-letter code: Putative isochorismate synthase (396 aa).

Belongs to the isochorismate synthase family.

It carries out the reaction chorismate = isochorismate. It functions in the pathway siderophore biosynthesis; amonabactin biosynthesis. In terms of biological role, involved in the synthesis of amonabactin, a phenolate siderophore containing 2,3-dihydroxybenzoic acid (2,3-DHB). This is Putative isochorismate synthase (amoA) from Aeromonas hydrophila.